The following is a 326-amino-acid chain: Peroxidase 43 (326 aa).

Positions 1-24 are cleaved as a signal peptide; sequence MVWANAKMRLALSLVTVFFGISLA. Intrachain disulfides connect cysteine 35/cysteine 112, cysteine 68/cysteine 73, cysteine 118/cysteine 322, and cysteine 196/cysteine 228. Residue histidine 66 is the Proton acceptor of the active site. 5 residues coordinate Ca(2+): aspartate 67, valine 70, glycine 72, aspartate 74, and serine 76. A glycan (N-linked (GlcNAc...) asparagine) is linked at asparagine 151. Proline 159 is a substrate binding site. Histidine 189 contacts heme b. Residue threonine 190 participates in Ca(2+) binding. Residues aspartate 241, serine 244, and aspartate 249 each coordinate Ca(2+).

It belongs to the peroxidase family. Classical plant (class III) peroxidase subfamily. Heme b serves as cofactor. Requires Ca(2+) as cofactor.

It is found in the secreted. It carries out the reaction 2 a phenolic donor + H2O2 = 2 a phenolic radical donor + 2 H2O. In terms of biological role, removal of H(2)O(2), oxidation of toxic reductants, biosynthesis and degradation of lignin, suberization, auxin catabolism, response to environmental stresses such as wounding, pathogen attack and oxidative stress. These functions might be dependent on each isozyme/isoform in each plant tissue. In Arabidopsis thaliana (Mouse-ear cress), this protein is Peroxidase 43 (PER43).